The primary structure comprises 390 residues: Putative glutamate--cysteine ligase 2 (390 aa).

It belongs to the glutamate--cysteine ligase type 2 family. YbdK subfamily.

The enzyme catalyses L-cysteine + L-glutamate + ATP = gamma-L-glutamyl-L-cysteine + ADP + phosphate + H(+). ATP-dependent carboxylate-amine ligase which exhibits weak glutamate--cysteine ligase activity. The chain is Putative glutamate--cysteine ligase 2 from Chloroflexus aggregans (strain MD-66 / DSM 9485).